Consider the following 325-residue polypeptide: Homeobox protein Hox-A1a (325 aa).

The Antp-type hexapeptide motif lies at 187–192 (TFDWMK). 2 disordered regions span residues 194 to 215 (KRNP…PNTV) and 264 to 325 (RMKQ…YPSN). Positions 212-271 (PNTVRTNFTTKQLTELEKEFHFNKYLTRARRVEIAAALQLNETQVKIWFQNRRMKQKKRE) form a DNA-binding region, homeobox. Residues 285–300 (SGERNQEKVEDGESEK) show a composition bias toward basic and acidic residues. Low complexity predominate over residues 301 to 317 (SVSAPSTPSPTSSTVSS).

This sequence belongs to the Antp homeobox family. Labial subfamily.

The protein resides in the nucleus. Functionally, sequence-specific transcription factor which is part of a developmental regulatory system that provides cells with specific positional identities on the anterior-posterior axis. This Takifugu rubripes (Japanese pufferfish) protein is Homeobox protein Hox-A1a (hoxa1a).